A 371-amino-acid polypeptide reads, in one-letter code: Bifunctional enzyme IspD/IspF (371 aa).

Residues 1-212 (MLDISLIMLG…CLIPPSNEHF (212 aa)) are 2-C-methyl-D-erythritol 4-phosphate cytidylyltransferase. Positions 212 to 371 (FTGIGFDAHE…ANLKYYDWTK (160 aa)) are 2-C-methyl-D-erythritol 2,4-cyclodiphosphate synthase. A divalent metal cation contacts are provided by Asp218 and His220. 4-CDP-2-C-methyl-D-erythritol 2-phosphate-binding positions include 218 to 220 (DAH) and 244 to 245 (HS). Residue His252 participates in a divalent metal cation binding. Residues 266–268 (DIG), 271–275 (FPDTD), 342–345 (TTTE), Phe349, and Arg352 each bind 4-CDP-2-C-methyl-D-erythritol 2-phosphate.

The protein in the N-terminal section; belongs to the IspD/TarI cytidylyltransferase family. IspD subfamily. This sequence in the C-terminal section; belongs to the IspF family. A divalent metal cation serves as cofactor.

It catalyses the reaction 2-C-methyl-D-erythritol 4-phosphate + CTP + H(+) = 4-CDP-2-C-methyl-D-erythritol + diphosphate. It carries out the reaction 4-CDP-2-C-methyl-D-erythritol 2-phosphate = 2-C-methyl-D-erythritol 2,4-cyclic diphosphate + CMP. Its pathway is isoprenoid biosynthesis; isopentenyl diphosphate biosynthesis via DXP pathway; isopentenyl diphosphate from 1-deoxy-D-xylulose 5-phosphate: step 2/6. It participates in isoprenoid biosynthesis; isopentenyl diphosphate biosynthesis via DXP pathway; isopentenyl diphosphate from 1-deoxy-D-xylulose 5-phosphate: step 4/6. Functionally, bifunctional enzyme that catalyzes the formation of 4-diphosphocytidyl-2-C-methyl-D-erythritol from CTP and 2-C-methyl-D-erythritol 4-phosphate (MEP) (IspD), and catalyzes the conversion of 4-diphosphocytidyl-2-C-methyl-D-erythritol 2-phosphate (CDP-ME2P) to 2-C-methyl-D-erythritol 2,4-cyclodiphosphate (ME-CPP) with a corresponding release of cytidine 5-monophosphate (CMP) (IspF). This chain is Bifunctional enzyme IspD/IspF, found in Campylobacter curvus (strain 525.92).